A 520-amino-acid chain; its full sequence is Nucleolar protein 12 (520 aa).

2 disordered regions span residues 1–29 (MGKK…NVSV) and 41–185 (AGPV…DDDE). Residues 78–95 (ASEDQFMEDAPESPDAAE) are compositionally biased toward acidic residues. The segment covering 120 to 132 (SYMRRLAKEEQKE) has biased composition (basic and acidic residues). Acidic residues predominate over residues 144 to 168 (LEEESEDGEKESPQSEDGESEDEGA). RRM domains follow at residues 191 to 303 (RTVF…NVAH) and 311 to 421 (RCVF…RAKK). Residues 472-520 (EGNRATADGSSRIRVRTKSRGSKAKKDSRSKKRAAAYKAAGGKKAKIGK) form a disordered region. Over residues 484 to 520 (IRVRTKSRGSKAKKDSRSKKRAAAYKAAGGKKAKIGK) the composition is skewed to basic residues.

This sequence belongs to the RRM RBM34 family.

The protein resides in the nucleus. Its subcellular location is the nucleolus. Involved in pre-25S rRNA processing. This chain is Nucleolar protein 12 (nop12), found in Emericella nidulans (strain FGSC A4 / ATCC 38163 / CBS 112.46 / NRRL 194 / M139) (Aspergillus nidulans).